The sequence spans 342 residues: Metalloendoproteinase 4-MMP (342 aa).

The N-terminal stretch at 1 to 34 is a signal peptide; it reads MHHHHHPCNRKPFTTIFSFFLLYLNLHNQQIIEA. Positions 35-124 are cleaved as a propeptide — activation peptide; it reads RNPSQFTTNP…KTAPFHTGKK (90 aa). The Cysteine switch motif lies at 104–111; it reads PRCGFPDD. Positions 106 and 252 each coordinate Zn(2+). Glu-253 is an active-site residue. 2 residues coordinate Zn(2+): His-256 and His-262. Asn-300 is a glycosylation site (N-linked (GlcNAc...) asparagine). Asp-317 carries GPI-anchor amidated aspartate lipidation. A propeptide spans 318 to 342 (removed in mature form); it reads GSRIRSQGMIYSTLSTVIALCFLNW.

Belongs to the peptidase M10A family. Matrix metalloproteinases (MMPs) subfamily. It depends on Zn(2+) as a cofactor. In terms of tissue distribution, mostly expressed in flowers and stems, and, to a lower extent, in leaves and roots.

It localises to the cell membrane. Its activity is regulated as follows. Repressed by acetohydroxamic acid (AHA). In terms of biological role, matrix metalloproteinases (MMPs) or matrixins may play a role in the degradation and remodeling of the extracellular matrix (ECM) during development or in response to stresses. Active on myelin basic protein (MBP) and, to some extent, on McaPLGLDpaAR-NH(2) (QF24) and beta-casein. This Arabidopsis thaliana (Mouse-ear cress) protein is Metalloendoproteinase 4-MMP.